The chain runs to 174 residues: Endoribonuclease YbeY (174 aa).

Zn(2+)-binding residues include H129, H133, and H139.

This sequence belongs to the endoribonuclease YbeY family. It depends on Zn(2+) as a cofactor.

It is found in the cytoplasm. Single strand-specific metallo-endoribonuclease involved in late-stage 70S ribosome quality control and in maturation of the 3' terminus of the 16S rRNA. This chain is Endoribonuclease YbeY, found in Lactobacillus delbrueckii subsp. bulgaricus (strain ATCC BAA-365 / Lb-18).